The following is a 691-amino-acid chain: Elongation factor G (691 aa).

Residues 8–283 (EDYRNFGIMA…AVVDYLPSPV (276 aa)) form the tr-type G domain. GTP contacts are provided by residues 17 to 24 (AHIDAGKT), 81 to 85 (DTPGH), and 135 to 138 (NKMD).

The protein belongs to the TRAFAC class translation factor GTPase superfamily. Classic translation factor GTPase family. EF-G/EF-2 subfamily.

It localises to the cytoplasm. Its function is as follows. Catalyzes the GTP-dependent ribosomal translocation step during translation elongation. During this step, the ribosome changes from the pre-translocational (PRE) to the post-translocational (POST) state as the newly formed A-site-bound peptidyl-tRNA and P-site-bound deacylated tRNA move to the P and E sites, respectively. Catalyzes the coordinated movement of the two tRNA molecules, the mRNA and conformational changes in the ribosome. The sequence is that of Elongation factor G from Methylorubrum populi (strain ATCC BAA-705 / NCIMB 13946 / BJ001) (Methylobacterium populi).